The primary structure comprises 643 residues: MPDRLVSATLALRDDGTLVSPEFGELHRGASGTLARAHRTFVAGNGLPARWQRRRTFTIVTTAFGAGAGFLAAWAAWRDDPARCERLHVVAVEPHPFSRDDLHRAVSHMVVDTTISADVDALLDAWPILVPGLHRLEFDEGRVVLTLAFGDTIDLLKKLVARADAFFLDGAAASGDGIRALAKLAGEHATFATHAKSDDVKHALGETGFTFREVDDRLVGDYAPRWRARRHEPPRALPVAARRAIVIGAGLAGCAVVERLAARGWDVTLIERHERIASEASGNPAGVFHPLMTRDDNVASRLTRGGFLHALARWRALERAGHAFSRSTHGMLHLAESADDFARMRDAFDAFGPPSDYATLLDADAARAHLNLPVAQGGLLFPHGGAVWPAGLCVAQYAAAGERVRLLASTCVARLERRDDTWHALDDTGATLADAPVVVLANAGDAARLAGLRHVTLQPVRGQLTLLPPGTTAPLPCPAIGDGYAVPLDDGTLLIGATFEPDDTDPAMRAAGHAENLDRVRHLLPGLIGALPDPATLRGRVAFRWVVGDRLPLIGPLADETQATANARALGGAQARDLPRMPGLYGAFGFGSRGLVWAALGAELIASQLEGEPWPLERELADAVDPARFLIRALRARRVGSAG.

A tRNA (mnm(5)s(2)U34)-methyltransferase region spans residues 1-223; the sequence is MPDRLVSATL…VDDRLVGDYA (223 aa). The tract at residues 247–643 is FAD-dependent cmnm(5)s(2)U34 oxidoreductase; the sequence is IGAGLAGCAV…LRARRVGSAG (397 aa).

This sequence in the N-terminal section; belongs to the methyltransferase superfamily. tRNA (mnm(5)s(2)U34)-methyltransferase family. It in the C-terminal section; belongs to the DAO family. FAD is required as a cofactor.

It is found in the cytoplasm. It catalyses the reaction 5-aminomethyl-2-thiouridine(34) in tRNA + S-adenosyl-L-methionine = 5-methylaminomethyl-2-thiouridine(34) in tRNA + S-adenosyl-L-homocysteine + H(+). Its function is as follows. Catalyzes the last two steps in the biosynthesis of 5-methylaminomethyl-2-thiouridine (mnm(5)s(2)U) at the wobble position (U34) in tRNA. Catalyzes the FAD-dependent demodification of cmnm(5)s(2)U34 to nm(5)s(2)U34, followed by the transfer of a methyl group from S-adenosyl-L-methionine to nm(5)s(2)U34, to form mnm(5)s(2)U34. This chain is tRNA 5-methylaminomethyl-2-thiouridine biosynthesis bifunctional protein MnmC, found in Burkholderia cenocepacia (strain HI2424).